We begin with the raw amino-acid sequence, 114 residues long: Large ribosomal subunit protein bL19 (114 aa).

The protein belongs to the bacterial ribosomal protein bL19 family.

Functionally, this protein is located at the 30S-50S ribosomal subunit interface and may play a role in the structure and function of the aminoacyl-tRNA binding site. The chain is Large ribosomal subunit protein bL19 from Lactococcus lactis subsp. lactis (strain IL1403) (Streptococcus lactis).